Reading from the N-terminus, the 239-residue chain is tRNA (guanine-N(1)-)-methyltransferase (239 aa).

Residues Gly-108 and 127-132 (LGDFVL) each bind S-adenosyl-L-methionine.

The protein belongs to the RNA methyltransferase TrmD family. As to quaternary structure, homodimer.

Its subcellular location is the cytoplasm. The enzyme catalyses guanosine(37) in tRNA + S-adenosyl-L-methionine = N(1)-methylguanosine(37) in tRNA + S-adenosyl-L-homocysteine + H(+). Functionally, specifically methylates guanosine-37 in various tRNAs. This is tRNA (guanine-N(1)-)-methyltransferase from Streptococcus thermophilus (strain CNRZ 1066).